The primary structure comprises 160 residues: Ribosomal RNA large subunit methyltransferase H (160 aa).

S-adenosyl-L-methionine is bound by residues leucine 76, glycine 108, and 127–132 (LGKMTW).

This sequence belongs to the RNA methyltransferase RlmH family. As to quaternary structure, homodimer.

The protein resides in the cytoplasm. The enzyme catalyses pseudouridine(1915) in 23S rRNA + S-adenosyl-L-methionine = N(3)-methylpseudouridine(1915) in 23S rRNA + S-adenosyl-L-homocysteine + H(+). Its function is as follows. Specifically methylates the pseudouridine at position 1915 (m3Psi1915) in 23S rRNA. The polypeptide is Ribosomal RNA large subunit methyltransferase H (Rhizobium etli (strain ATCC 51251 / DSM 11541 / JCM 21823 / NBRC 15573 / CFN 42)).